The primary structure comprises 154 residues: Aspartate carbamoyltransferase regulatory chain (154 aa).

The Zn(2+) site is built by Cys109, Cys114, Cys138, and Cys141.

The protein belongs to the PyrI family. In terms of assembly, contains catalytic and regulatory chains. The cofactor is Zn(2+).

In terms of biological role, involved in allosteric regulation of aspartate carbamoyltransferase. In Yersinia pseudotuberculosis serotype O:1b (strain IP 31758), this protein is Aspartate carbamoyltransferase regulatory chain.